Reading from the N-terminus, the 521-residue chain is Cytochrome P450 1A1 (521 aa).

Substrate is bound at residue Phe229. Cys463 is a binding site for heme.

The protein belongs to the cytochrome P450 family. It depends on heme as a cofactor.

It is found in the endoplasmic reticulum membrane. The protein localises to the microsome membrane. It catalyses the reaction an organic molecule + reduced [NADPH--hemoprotein reductase] + O2 = an alcohol + oxidized [NADPH--hemoprotein reductase] + H2O + H(+). Its function is as follows. Cytochromes P450 are a group of heme-thiolate monooxygenases. They oxidize a variety of structurally unrelated compounds, including steroids, fatty acids, and xenobiotics. The sequence is that of Cytochrome P450 1A1 (cyp1a1) from Chelon saliens (Leaping mullet).